The following is a 1015-amino-acid chain: DNA polymerase catalytic subunit (1015 aa).

This sequence belongs to the DNA polymerase type-B family. In terms of assembly, forms a complex with the ssDNA-binding protein BALF2, the DNA polymerase processivity factor BMRF1, and the alkaline exonuclease BGLF5. Interacts with the putative helicase-primase complex composed of BBLF4, BSLF1 and BBLF2/3 proteins; these interactions may coordinate leading and lagging strand DNA synthesis at the replication fork.

The protein resides in the host nucleus. It catalyses the reaction DNA(n) + a 2'-deoxyribonucleoside 5'-triphosphate = DNA(n+1) + diphosphate. Replicates viral genomic DNA in the late phase of lytic infection, producing long concatemeric DNA. The replication complex is composed of six viral proteins: the DNA polymerase, processivity factor, primase, primase-associated factor, helicase, and ssDNA-binding protein. This Epstein-Barr virus (strain B95-8) (HHV-4) protein is DNA polymerase catalytic subunit.